Reading from the N-terminus, the 215-residue chain is uncharacterized protein (215 aa).

This sequence belongs to the thiaminase-2 family.

This is an uncharacterized protein from Haemophilus influenzae (strain ATCC 51907 / DSM 11121 / KW20 / Rd).